A 134-amino-acid chain; its full sequence is uncharacterized protein (134 aa).

The signal sequence occupies residues 1 to 16 (MAKAVALLLAAIAASA).

This is an uncharacterized protein from Oryza sativa subsp. indica (Rice).